The primary structure comprises 223 residues: MNVKIKKLHNWDMTPTEAILLQRELAQKVSACGTLSSISLVAGADVWHSRTSGMGRAAVVVLSYPDMNLVEVSRSEGDCHIPYIPGLLSFREMPLLLSAFEGLESMPDFILMDGQGLAHPRRLGIASHLGLFLNKPVIGCAKSRLVGEYAPLADEAGSYSDLYHNSQLVGRVLRTRRGVNPLFISVGHKICLEEACSRVADCCRGYRLPEPLRHAHLAAAQLI.

Residues aspartate 45 and aspartate 113 each contribute to the Mg(2+) site.

It belongs to the endonuclease V family. Mg(2+) serves as cofactor.

Its subcellular location is the cytoplasm. It catalyses the reaction Endonucleolytic cleavage at apurinic or apyrimidinic sites to products with a 5'-phosphate.. In terms of biological role, DNA repair enzyme involved in the repair of deaminated bases. Selectively cleaves double-stranded DNA at the second phosphodiester bond 3' to a deoxyinosine leaving behind the intact lesion on the nicked DNA. This Dehalococcoides mccartyi (strain CBDB1) protein is Endonuclease V.